The following is a 1143-amino-acid chain: DNA-directed RNA polymerase subunit beta (1143 aa).

It belongs to the RNA polymerase beta chain family. In terms of assembly, in plastids the minimal PEP RNA polymerase catalytic core is composed of four subunits: alpha, beta, beta', and beta''. When a (nuclear-encoded) sigma factor is associated with the core the holoenzyme is formed, which can initiate transcription.

Its subcellular location is the plastid. It is found in the chloroplast. The enzyme catalyses RNA(n) + a ribonucleoside 5'-triphosphate = RNA(n+1) + diphosphate. Its function is as follows. DNA-dependent RNA polymerase catalyzes the transcription of DNA into RNA using the four ribonucleoside triphosphates as substrates. The chain is DNA-directed RNA polymerase subunit beta from Porphyra purpurea (Red seaweed).